The following is a 364-amino-acid chain: DNA replication and repair protein RecF (364 aa).

30 to 37 contributes to the ATP binding site; that stretch reads GLNAQGKS.

Belongs to the RecF family.

It is found in the cytoplasm. Its function is as follows. The RecF protein is involved in DNA metabolism; it is required for DNA replication and normal SOS inducibility. RecF binds preferentially to single-stranded, linear DNA. It also seems to bind ATP. This is DNA replication and repair protein RecF from Caldanaerobacter subterraneus subsp. tengcongensis (strain DSM 15242 / JCM 11007 / NBRC 100824 / MB4) (Thermoanaerobacter tengcongensis).